The sequence spans 548 residues: Chaperonin GroEL (548 aa).

Residues 29–32 (TLGP), Lys-50, 86–90 (DGTTT), Gly-416, and Asp-497 each bind ATP.

The protein belongs to the chaperonin (HSP60) family. In terms of assembly, forms a cylinder of 14 subunits composed of two heptameric rings stacked back-to-back. Interacts with the co-chaperonin GroES.

It is found in the cytoplasm. It carries out the reaction ATP + H2O + a folded polypeptide = ADP + phosphate + an unfolded polypeptide.. Functionally, together with its co-chaperonin GroES, plays an essential role in assisting protein folding. The GroEL-GroES system forms a nano-cage that allows encapsulation of the non-native substrate proteins and provides a physical environment optimized to promote and accelerate protein folding. This chain is Chaperonin GroEL, found in Neorickettsia sennetsu (strain ATCC VR-367 / Miyayama) (Ehrlichia sennetsu).